Here is a 363-residue protein sequence, read N- to C-terminus: Protein-arginine kinase (363 aa).

One can recognise a Phosphagen kinase C-terminal domain in the interval 24 to 254 (IVLSSRIRLA…AQLIEQERSA (231 aa)). Residues 27-31 (SSRIR), His92, Arg125, 176-180 (RASVM), and 207-212 (RGIYGE) each bind ATP. The RDXXRA motif of the pArg binding pocket involved in allosteric regulation motif lies at 337 to 342 (RDIKRA).

It belongs to the ATP:guanido phosphotransferase family.

It carries out the reaction L-arginyl-[protein] + ATP = N(omega)-phospho-L-arginyl-[protein] + ADP + H(+). Its activity is regulated as follows. Appears to be allosterically activated by the binding of pArg-containing polypeptides to the pArg-binding pocket localized in the C-terminal domain of McsB. Its function is as follows. Catalyzes the specific phosphorylation of arginine residues in a large number of proteins. Is part of the bacterial stress response system. Protein arginine phosphorylation has a physiologically important role and is involved in the regulation of many critical cellular processes, such as protein homeostasis, motility, competence, and stringent and stress responses, by regulating gene expression and protein activity. The protein is Protein-arginine kinase of Bacillus pumilus (strain SAFR-032).